Consider the following 278-residue polypeptide: Lipoyl-[GcvH]:protein N-lipoyltransferase (278 aa).

In terms of domain architecture, BPL/LPL catalytic spans 44–250 (RMAPSTVRGW…SLRHYAGDLV (207 aa)). Cys-149 functions as the Acyl-thioester intermediate in the catalytic mechanism.

This sequence belongs to the octanoyltransferase LipL family.

The catalysed reaction is N(6)-[(R)-lipoyl]-L-lysyl-[glycine-cleavage complex H protein] + L-lysyl-[lipoyl-carrier protein] = L-lysyl-[glycine-cleavage complex H protein] + N(6)-[(R)-lipoyl]-L-lysyl-[lipoyl-carrier protein]. Its pathway is protein modification; protein lipoylation via exogenous pathway. Its function is as follows. Catalyzes the amidotransfer (transamidation) of the lipoyl moiety from lipoyl-GcvH to the lipoyl domain of the E2 subunit of lipoate-dependent enzymes. Takes part in a pathway for scavenging of lipoic acid derived from eukaryotic host cells. Cannot use lipoyl-tripeptide (DK(L)A), lipoamide (LD), or free lipoate as substrate. The chain is Lipoyl-[GcvH]:protein N-lipoyltransferase from Listeria monocytogenes serovar 1/2a (strain ATCC BAA-679 / EGD-e).